Here is a 193-residue protein sequence, read N- to C-terminus: Adenine phosphoribosyltransferase (193 aa).

This sequence belongs to the purine/pyrimidine phosphoribosyltransferase family. Homodimer.

Its subcellular location is the cytoplasm. The enzyme catalyses AMP + diphosphate = 5-phospho-alpha-D-ribose 1-diphosphate + adenine. Its pathway is purine metabolism; AMP biosynthesis via salvage pathway; AMP from adenine: step 1/1. Functionally, catalyzes a salvage reaction resulting in the formation of AMP, that is energically less costly than de novo synthesis. This chain is Adenine phosphoribosyltransferase, found in Bifidobacterium longum subsp. infantis (strain ATCC 15697 / DSM 20088 / JCM 1222 / NCTC 11817 / S12).